Consider the following 213-residue polypeptide: Kiwellin (213 aa).

Positions 1–24 are cleaved as a signal peptide; the sequence is MAQLALLLLSLFLTLISLAPPGAS. Intrachain disulfides connect C28-C60, C32-C44, and C38-C49. 2 positions are modified to 4-hydroxyproline: P65 and P67. Intrachain disulfides connect C72–C90, C80–C172, C119–C144, and C166–C172. The interval 91-121 is disordered; it reads SPPVTSSTPAKLTNNDFSEGGDDGGPSECDE. Over residues 93–107 the composition is skewed to polar residues; it reads PVTSSTPAKLTNNDF.

This sequence belongs to the kiwellin family. In terms of processing, undergoes proteolytic cleavage by actinidin to produce kissper and KiTH. Three forms of KiTH are produced by cleavage at different sites, the main form produced in vivo is KiTH-1.

It localises to the secreted. Functionally, pH-dependent, voltage-gated and anion-selective pore-forming peptide. The protein is Kiwellin of Actinidia deliciosa (Kiwi).